The primary structure comprises 183 residues: Orotate phosphoribosyltransferase (183 aa).

Residues arginine 100, lysine 101, lysine 104, histidine 106, and 126–134 (EDVVTTGSS) each bind 5-phospho-alpha-D-ribose 1-diphosphate. Threonine 130 and arginine 158 together coordinate orotate.

The protein belongs to the purine/pyrimidine phosphoribosyltransferase family. PyrE subfamily. As to quaternary structure, homodimer. Mg(2+) is required as a cofactor.

The catalysed reaction is orotidine 5'-phosphate + diphosphate = orotate + 5-phospho-alpha-D-ribose 1-diphosphate. It participates in pyrimidine metabolism; UMP biosynthesis via de novo pathway; UMP from orotate: step 1/2. In terms of biological role, catalyzes the transfer of a ribosyl phosphate group from 5-phosphoribose 1-diphosphate to orotate, leading to the formation of orotidine monophosphate (OMP). This is Orotate phosphoribosyltransferase from Aquifex aeolicus (strain VF5).